We begin with the raw amino-acid sequence, 108 residues long: Nucleoid-associated protein Bphyt_1827 (108 aa).

Positions 87–108 (AQEKMGGMTSGLPLPPGFKLPF) are disordered. Pro residues predominate over residues 99–108 (PLPPGFKLPF).

It belongs to the YbaB/EbfC family. In terms of assembly, homodimer.

It localises to the cytoplasm. The protein resides in the nucleoid. In terms of biological role, binds to DNA and alters its conformation. May be involved in regulation of gene expression, nucleoid organization and DNA protection. This Paraburkholderia phytofirmans (strain DSM 17436 / LMG 22146 / PsJN) (Burkholderia phytofirmans) protein is Nucleoid-associated protein Bphyt_1827.